Here is a 217-residue protein sequence, read N- to C-terminus: Adenylate kinase (217 aa).

Position 11–16 (11–16) interacts with ATP; sequence GAGKGT. The tract at residues 31–60 is NMP; that stretch reads STGDMFREAMANKTPVGLEAKSYIDKGDLV. AMP-binding positions include T32, R37, 58 to 60, 86 to 89, and Q93; these read DLV and GFPR. An LID region spans residues 127–165; the sequence is ARFMCKNCGATYNKFSKKPKVEGTCDRCGGHEFYQREDD. Residue R128 participates in ATP binding. Zn(2+) is bound by residues C131 and C134. 137 to 138 is a binding site for ATP; sequence TY. 2 residues coordinate Zn(2+): C151 and C154. Residues R162 and R173 each coordinate AMP. Position 201 (Q201) interacts with ATP.

This sequence belongs to the adenylate kinase family. In terms of assembly, monomer.

Its subcellular location is the cytoplasm. It carries out the reaction AMP + ATP = 2 ADP. The protein operates within purine metabolism; AMP biosynthesis via salvage pathway; AMP from ADP: step 1/1. Its function is as follows. Catalyzes the reversible transfer of the terminal phosphate group between ATP and AMP. Plays an important role in cellular energy homeostasis and in adenine nucleotide metabolism. This chain is Adenylate kinase, found in Lactobacillus delbrueckii subsp. bulgaricus (strain ATCC 11842 / DSM 20081 / BCRC 10696 / JCM 1002 / NBRC 13953 / NCIMB 11778 / NCTC 12712 / WDCM 00102 / Lb 14).